The following is a 131-amino-acid chain: MSMQDSIADMLTTIRNGQISKKEKVCTPSSAMKVAIVHVLVEEGFIQKYNIKDSIKPTLEVFLKYYQKRKPVIDIIKRISRPGLRIYKKRKELPQVMSGMGIIIISTSKGVITDNRARQLNVGGEIICYVS.

It belongs to the universal ribosomal protein uS8 family. In terms of assembly, part of the 30S ribosomal subunit. Contacts proteins S5 and S12.

One of the primary rRNA binding proteins, it binds directly to 16S rRNA central domain where it helps coordinate assembly of the platform of the 30S subunit. This is Small ribosomal subunit protein uS8 from Blochmanniella pennsylvanica (strain BPEN).